Consider the following 539-residue polypeptide: Protein pim1 (539 aa).

Residues 1-53 form a disordered region; sequence MTSNRSTRSSTKREEVSKNGVEKRELDESDVMKNGKKPVKRAKVSSLPKPVRV. Residues 11-33 are compositionally biased toward basic and acidic residues; sequence TKREEVSKNGVEKRELDESDVMK. A compositionally biased stretch (basic residues) spans 34 to 43; it reads NGKKPVKRAK. RCC1 repeat units follow at residues 70–125, 127–191, 192–243, 244–296, 298–353, 354–417, and 419–472; these read RLNV…ALSH, GRVY…AITD, NGCC…ALTT, TGKV…AIDN, GRVY…ALLE, DGRV…AVTS, and GKVY…IAGI. The interval 478–539 is disordered; the sequence is EPVANGIKSE…SVLEPSSTTA (62 aa). The segment covering 486-504 has biased composition (basic and acidic residues); that stretch reads SEPENEKKLKTEETSKTDD. The span at 514–525 shows a compositional bias: polar residues; sequence VTSNGEPSTATS.

In terms of assembly, oligomer of dis3, pim1 and spi1. Interacts with ned1.

It localises to the nucleus. Promotes the exchange of Ran(spi1)-bound GDP by GTP. Involved in the control of mitosis. Regulates a variety of nuclear events, including mitotic check-point, chromosome decondensation and mRNA processing/transport. The sequence is that of Protein pim1 (pim1) from Schizosaccharomyces pombe (strain 972 / ATCC 24843) (Fission yeast).